We begin with the raw amino-acid sequence, 350 residues long: Bifunctional methylenetetrahydrofolate dehydrogenase/cyclohydrolase, mitochondrial (350 aa).

The N-terminal 35 residues, 1–35, are a transit peptide targeting the mitochondrion; sequence MAAASFITSLVTRLLRSAQSGRLHQRPFHLSAVRN. The residue at position 50 (K50) is an N6-acetyllysine; alternate. Residue K50 forms a Glycyl lysine isopeptide (Lys-Gly) (interchain with G-Cter in SUMO2); alternate linkage. Substrate contacts are provided by residues 84–88 and 131–133; these read YVLNK and VQL. NAD(+)-binding positions include 200–202 and R233; that span reads GRS. 309–313 is a binding site for substrate; sequence PGGVG.

Belongs to the tetrahydrofolate dehydrogenase/cyclohydrolase family. As to quaternary structure, homodimer. The cofactor is Mg(2+).

Its subcellular location is the mitochondrion. The catalysed reaction is (6R)-5,10-methylene-5,6,7,8-tetrahydrofolate + NAD(+) = (6R)-5,10-methenyltetrahydrofolate + NADH. It catalyses the reaction (6R)-5,10-methenyltetrahydrofolate + H2O = (6R)-10-formyltetrahydrofolate + H(+). Although its dehydrogenase activity is NAD-specific, it can also utilize NADP at a reduced efficiency. This chain is Bifunctional methylenetetrahydrofolate dehydrogenase/cyclohydrolase, mitochondrial (MTHFD2), found in Bos taurus (Bovine).